The chain runs to 213 residues: Uracil phosphoribosyltransferase (213 aa).

5-phospho-alpha-D-ribose 1-diphosphate contacts are provided by residues arginine 77, arginine 102, and 129-137; that span reads DPMLATGGS. Residues isoleucine 198 and 203–205 each bind uracil; that span reads GDA. 5-phospho-alpha-D-ribose 1-diphosphate is bound at residue aspartate 204.

The protein belongs to the UPRTase family. The cofactor is Mg(2+).

The catalysed reaction is UMP + diphosphate = 5-phospho-alpha-D-ribose 1-diphosphate + uracil. Its pathway is pyrimidine metabolism; UMP biosynthesis via salvage pathway; UMP from uracil: step 1/1. Its activity is regulated as follows. Allosterically activated by GTP. Catalyzes the conversion of uracil and 5-phospho-alpha-D-ribose 1-diphosphate (PRPP) to UMP and diphosphate. The chain is Uracil phosphoribosyltransferase from Mycobacteroides abscessus (strain ATCC 19977 / DSM 44196 / CCUG 20993 / CIP 104536 / JCM 13569 / NCTC 13031 / TMC 1543 / L948) (Mycobacterium abscessus).